Consider the following 103-residue polypeptide: Enhancer of rudimentary homolog (103 aa).

The protein belongs to the E(R) family. In terms of assembly, homodimer.

Its function is as follows. May have a role in the cell cycle. This chain is Enhancer of rudimentary homolog, found in Aedes aegypti (Yellowfever mosquito).